Reading from the N-terminus, the 104-residue chain is Probable guanidinium efflux system subunit GdnD (104 aa).

4 consecutive transmembrane segments (helical) span residues 3–23 (WICLIAAGILEMLGVTMMNQF), 31–51 (WIFLLIIGFAASFFLLSLAME), 58–78 (AYAVWTGIGTVGGALVGILFY), and 84–104 (GKRIFFIALILGSAVGLKLIS).

This sequence belongs to the drug/metabolite transporter (DMT) superfamily. Small multidrug resistance (SMR) (TC 2.A.7.1) family. YkkC/YkkD subfamily. As to quaternary structure, the efflux pump is composed of GdnC and GdnD.

It localises to the cell membrane. Probably involved in guanidinium transport. The chain is Probable guanidinium efflux system subunit GdnD from Bacillus licheniformis (strain ATCC 14580 / DSM 13 / JCM 2505 / CCUG 7422 / NBRC 12200 / NCIMB 9375 / NCTC 10341 / NRRL NRS-1264 / Gibson 46).